We begin with the raw amino-acid sequence, 252 residues long: Phosphate import ATP-binding protein PstB (252 aa).

Positions 6–247 (ISAENLNLFY…PKDQRTEDYI (242 aa)) constitute an ABC transporter domain. 38-45 (GPSGCGKS) serves as a coordination point for ATP.

This sequence belongs to the ABC transporter superfamily. Phosphate importer (TC 3.A.1.7) family. The complex is composed of two ATP-binding proteins (PstB), two transmembrane proteins (PstC and PstA) and a solute-binding protein (PstS).

It localises to the cell membrane. It catalyses the reaction phosphate(out) + ATP + H2O = ADP + 2 phosphate(in) + H(+). Its function is as follows. Part of the ABC transporter complex PstSACB involved in phosphate import. Responsible for energy coupling to the transport system. This chain is Phosphate import ATP-binding protein PstB, found in Heliobacterium mobile (Heliobacillus mobilis).